The following is a 148-amino-acid chain: 3-dehydroquinate dehydratase (148 aa).

Residue Tyr-22 is the Proton acceptor of the active site. Residues Asn-73, His-79, and Asp-86 each contribute to the substrate site. His-99 (proton donor) is an active-site residue. Substrate is bound by residues 100 to 101 (LS) and Arg-110.

This sequence belongs to the type-II 3-dehydroquinase family. In terms of assembly, homododecamer.

It catalyses the reaction 3-dehydroquinate = 3-dehydroshikimate + H2O. The protein operates within metabolic intermediate biosynthesis; chorismate biosynthesis; chorismate from D-erythrose 4-phosphate and phosphoenolpyruvate: step 3/7. In terms of biological role, catalyzes a trans-dehydration via an enolate intermediate. The polypeptide is 3-dehydroquinate dehydratase (Prochlorococcus marinus (strain MIT 9211)).